The chain runs to 120 residues: Large ribosomal subunit protein bL17 (120 aa).

It belongs to the bacterial ribosomal protein bL17 family. In terms of assembly, part of the 50S ribosomal subunit. Contacts protein L32.

This chain is Large ribosomal subunit protein bL17, found in Mycoplasmopsis synoviae (strain 53) (Mycoplasma synoviae).